We begin with the raw amino-acid sequence, 203 residues long: ATP-dependent Clp protease proteolytic subunit (203 aa).

The active-site Nucleophile is the serine 107. Histidine 132 is a catalytic residue.

This sequence belongs to the peptidase S14 family. Fourteen ClpP subunits assemble into 2 heptameric rings which stack back to back to give a disk-like structure with a central cavity, resembling the structure of eukaryotic proteasomes.

The protein resides in the cytoplasm. The catalysed reaction is Hydrolysis of proteins to small peptides in the presence of ATP and magnesium. alpha-casein is the usual test substrate. In the absence of ATP, only oligopeptides shorter than five residues are hydrolyzed (such as succinyl-Leu-Tyr-|-NHMec, and Leu-Tyr-Leu-|-Tyr-Trp, in which cleavage of the -Tyr-|-Leu- and -Tyr-|-Trp bonds also occurs).. Functionally, cleaves peptides in various proteins in a process that requires ATP hydrolysis. Has a chymotrypsin-like activity. Plays a major role in the degradation of misfolded proteins. The polypeptide is ATP-dependent Clp protease proteolytic subunit (Pelagibacter ubique (strain HTCC1062)).